Consider the following 469-residue polypeptide: DNA-binding transcriptional regulator NtrC (469 aa).

The 115-residue stretch at 5-119 (IVWVVDDDSS…EAVALVERAI (115 aa)) folds into the Response regulatory domain. Aspartate 54 carries the post-translational modification 4-aspartylphosphate. The 230-residue stretch at 140-369 (IIGEAPAMQD…LENTCRWLTV (230 aa)) folds into the Sigma-54 factor interaction domain. ATP is bound by residues 168–175 (GESGTGKE) and 231–240 (ADGGTLFLDE). The H-T-H motif DNA-binding region spans 445–464 (KQEAARLLGWGRNTLTRKLK).

Post-translationally, phosphorylated and dephosphorylated by NtrB.

Its subcellular location is the cytoplasm. Functionally, member of the two-component regulatory system NtrB/NtrC, which controls expression of the nitrogen-regulated (ntr) genes in response to nitrogen limitation. Phosphorylated NtrC binds directly to DNA and stimulates the formation of open promoter-sigma54-RNA polymerase complexes. This is DNA-binding transcriptional regulator NtrC (glnG) from Escherichia coli O157:H7.